A 60-amino-acid chain; its full sequence is Large ribosomal subunit protein bL32 (60 aa).

Belongs to the bacterial ribosomal protein bL32 family.

In Streptococcus pneumoniae serotype 19F (strain G54), this protein is Large ribosomal subunit protein bL32.